Here is a 439-residue protein sequence, read N- to C-terminus: 23S rRNA (uracil(1939)-C(5))-methyltransferase RlmD (439 aa).

One can recognise a TRAM domain in the interval 10–68 (KSTQPQRIEFTVDSLDHHCVGIGRHQGKAIFIEGALPGEQVKARILDDKKQYAHAALQQ). Positions 81, 87, 90, and 169 each coordinate [4Fe-4S] cluster. S-adenosyl-L-methionine is bound by residues Gln-273, Phe-302, Asn-307, Glu-323, Asp-350, and Asp-371. The active-site Nucleophile is Cys-397.

This sequence belongs to the class I-like SAM-binding methyltransferase superfamily. RNA M5U methyltransferase family. RlmD subfamily.

It carries out the reaction uridine(1939) in 23S rRNA + S-adenosyl-L-methionine = 5-methyluridine(1939) in 23S rRNA + S-adenosyl-L-homocysteine + H(+). Functionally, catalyzes the formation of 5-methyl-uridine at position 1939 (m5U1939) in 23S rRNA. The sequence is that of 23S rRNA (uracil(1939)-C(5))-methyltransferase RlmD from Aeromonas salmonicida (strain A449).